The following is a 118-amino-acid chain: uncharacterized protein (118 aa).

The interval 49–80 is disordered; that stretch reads SKEEHTTSAANLHPRKKKRMPPRRAEKNKAPN. The segment covering 61–70 has biased composition (basic residues); that stretch reads HPRKKKRMPP.

This is an uncharacterized protein from Saccharomyces cerevisiae (strain ATCC 204508 / S288c) (Baker's yeast).